A 413-amino-acid polypeptide reads, in one-letter code: Putative competence-damage inducible protein (413 aa).

Belongs to the CinA family.

This chain is Putative competence-damage inducible protein, found in Halothermothrix orenii (strain H 168 / OCM 544 / DSM 9562).